A 183-amino-acid chain; its full sequence is U3 small nucleolar ribonucleoprotein protein imp3 (183 aa).

Residues 108 to 174 (RRLPVVMRNI…IKKHVMDYNN (67 aa)) form the S4 RNA-binding domain.

It belongs to the universal ribosomal protein uS4 family. As to quaternary structure, component of a heterotrimeric complex containing imp3, imp4 and mpp10.

It is found in the nucleus. The protein resides in the nucleolus. Component of the U3 small nucleolar ribonucleoprotein. Required for the early cleavages at sites A0, A1 and A2 during 18S ribosomal pre-RNA processing. The sequence is that of U3 small nucleolar ribonucleoprotein protein imp3 from Caenorhabditis elegans.